Consider the following 225-residue polypeptide: Dimerizing cyclase tstC (225 aa).

A signal peptide spans 1–19 (MRLSTLSSLLLGSSSIVFA). Residues asparagine 146, asparagine 195, and asparagine 217 are each glycosylated (N-linked (GlcNAc...) asparagine).

The protein belongs to the dimerizing cyclase tstC family.

The catalysed reaction is 2 [4-(deca-1,8-diyl)-2,5-dioxo-2,5-dihydro-3-furanyl]acetate + H(+) = 2-[(1R,8S,14R,15R)-11-hydroxy-14,15-bis[(6E)-oct-6-en-1-yl]-3,5,9-trioxo-4,10-dioxatetracyclo[9.4.0.0(2,6).0(8,12)]pentadeca-2(6),12-dien-8-yl]acetate + CO2. The protein operates within secondary metabolite biosynthesis. Dimerizing cyclase; part of the gene cluster that mediates the biosynthesis of the antihypercholesterolemic agents phomoidrides which are dimeric anhydrides. Within the pathway, tstC produces the bicyclo[4.3.1]deca-1,6-diene core of phomoidrides via the dimerization of the monomeric anhydrides leading to prephomoidride. The pathway begins with the highly reducing polyketide synthase tstA that catalyzes the formation of a C12-fatty acyl-ACP, starting from one acetate and 5 malonate units. The hydrolase tstM is involved in the release of the C12-fatty acyl chain from phiA. The alkylcitrate synthase (ACS) tstJ and the alkylcitrate dehydratase (ACDH) tstI then give rise to decarboxylated monomeric anhydrides by coupling the C12-fatty acyl chain with oxalacetic acid. The cyclase tstC is responsible for the dimerization of the monomeric anhydrides which leads to the production of prephomoidride that contains the characteristic bicyclo[4.3.1]deca-1,6-diene system of phomoidrides. Iterative oxidation catalyzed by the alpha-ketoglutarate-dependent dioxygenase tstK produced then phomoidride A. Finally, the methyltransferase tstE converts phomoidride A to phomoidride B via an acetalization reaction. The phosphatidylethanolamine-binding protein tstB and tstN are not essential for dimerization and their functions have still to be determined. In Talaromyces stipitatus (strain ATCC 10500 / CBS 375.48 / QM 6759 / NRRL 1006) (Penicillium stipitatum), this protein is Dimerizing cyclase tstC.